The following is a 118-amino-acid chain: ATP synthase subunit c (118 aa).

The next 2 helical transmembrane spans lie at 34–54 (AIFAVGAMIGAGIAIGVGAVG) and 88–108 (MAMAESIAIYALVVSLVLIFA).

Belongs to the ATPase C chain family. F-type ATPases have 2 components, F(1) - the catalytic core - and F(0) - the membrane proton channel. F(1) has five subunits: alpha(3), beta(3), gamma(1), delta(1), epsilon(1). F(0) has three main subunits: a(1), b(2) and c(10-14). The alpha and beta chains form an alternating ring which encloses part of the gamma chain. F(1) is attached to F(0) by a central stalk formed by the gamma and epsilon chains, while a peripheral stalk is formed by the delta and b chains.

It is found in the cell inner membrane. Its function is as follows. F(1)F(0) ATP synthase produces ATP from ADP in the presence of a proton or sodium gradient. F-type ATPases consist of two structural domains, F(1) containing the extramembraneous catalytic core and F(0) containing the membrane proton channel, linked together by a central stalk and a peripheral stalk. During catalysis, ATP synthesis in the catalytic domain of F(1) is coupled via a rotary mechanism of the central stalk subunits to proton translocation. In terms of biological role, key component of the F(0) channel; it plays a direct role in translocation across the membrane. A homomeric c-ring of between 10-14 subunits forms the central stalk rotor element with the F(1) delta and epsilon subunits. This Syntrophus aciditrophicus (strain SB) protein is ATP synthase subunit c.